The sequence spans 236 residues: UPF0257 lipoprotein YnfC (236 aa).

The signal sequence occupies residues 1-16 (MKKPLLLTLLCMILAG). A lipid anchor (N-palmitoyl cysteine) is attached at cysteine 17. Cysteine 17 carries the S-diacylglycerol cysteine lipid modification.

The protein belongs to the UPF0257 family.

Its subcellular location is the cell membrane. This is UPF0257 lipoprotein YnfC from Salmonella typhi.